A 109-amino-acid polypeptide reads, in one-letter code: UPF0060 membrane protein RHA1_ro06609 (109 aa).

The next 4 helical transmembrane spans lie at 7–27 (VALFAVAALFEIGGAWLVWQG), 33–53 (GWIWIGAGVAALGAYGFVATL), 62–82 (ILAAYGGVFVAGSLIWGMVAD), and 88–108 (RWDVSGALICLLGMAVIMYAP).

The protein belongs to the UPF0060 family.

It is found in the cell membrane. This Rhodococcus jostii (strain RHA1) protein is UPF0060 membrane protein RHA1_ro06609.